A 123-amino-acid polypeptide reads, in one-letter code: UPF0102 protein MCA0184 (123 aa).

The protein belongs to the UPF0102 family.

This is UPF0102 protein MCA0184 from Methylococcus capsulatus (strain ATCC 33009 / NCIMB 11132 / Bath).